Consider the following 340-residue polypeptide: MKHHNYYPSTCLSILPFLLPLTMSHPQQNLLATTTSNTKAGNPVFPGWYADPEARLFNAQYWIYPTYSADYSEQTFFDAFSSPDLLTWTKHPTILNITNIPWSTNRAAWAPSVGRRLRSSANAEEEYDYFLYFSVGDGTGIGVAKSTTGKPEGPYEDVLGEPLVNGTVYGAEAIDAQIFQDDDGRNWLYFGGWSHAVVVELGEDMISLKGDYLEITPEGYVEGPWMLKRNGIYYYMFSVGGWGDNSYGVSYVTADSPTGPFSSTPKKILQGNDAVGTSTGHNSVFTPDGQDYYIVYHRRYVNDTARDHRVTCIDRMYFNEAGEILPVNITLEGVEGRTLS.

An N-terminal signal peptide occupies residues 1 to 24 (MKHHNYYPSTCLSILPFLLPLTMS). Asp-51 (proton acceptor) is an active-site residue. 2 N-linked (GlcNAc...) asparagine glycosylation sites follow: Asn-96 and Asn-165. The active-site Proton donor is the Glu-222. Asn-302 and Asn-328 each carry an N-linked (GlcNAc...) asparagine glycan.

Belongs to the glycosyl hydrolase 43 family.

The protein resides in the secreted. The protein operates within glycan degradation. Functionally, glycoside hydrolase family 43 beta-D-galactofuranosidase involved in the degradation of beta-galactofuranoside (Galf)-containing glycans such as galactomannan or O-glycans. Is not active on beta-1,5- or beta-1,6-linked beta-D-galactofuranose (Galf) residues. This Aspergillus niger (strain ATCC MYA-4892 / CBS 513.88 / FGSC A1513) protein is Beta-D-galactofuranosidase xynD.